We begin with the raw amino-acid sequence, 301 residues long: Bifunctional protein FolD (301 aa).

Residues 164–166, Ser-191, and Ile-232 contribute to the NADP(+) site; that span reads GRS.

Belongs to the tetrahydrofolate dehydrogenase/cyclohydrolase family. As to quaternary structure, homodimer.

The enzyme catalyses (6R)-5,10-methylene-5,6,7,8-tetrahydrofolate + NADP(+) = (6R)-5,10-methenyltetrahydrofolate + NADPH. The catalysed reaction is (6R)-5,10-methenyltetrahydrofolate + H2O = (6R)-10-formyltetrahydrofolate + H(+). The protein operates within one-carbon metabolism; tetrahydrofolate interconversion. Catalyzes the oxidation of 5,10-methylenetetrahydrofolate to 5,10-methenyltetrahydrofolate and then the hydrolysis of 5,10-methenyltetrahydrofolate to 10-formyltetrahydrofolate. The protein is Bifunctional protein FolD of Borreliella afzelii (strain PKo) (Borrelia afzelii).